The sequence spans 120 residues: NADH-ubiquinone oxidoreductase chain 3 (120 aa).

A run of 3 helical transmembrane segments spans residues 10-30 (ILIL…LGYF), 62-82 (FYLV…LFPF), and 89-109 (MTLF…IGFI).

This sequence belongs to the complex I subunit 3 family.

Its subcellular location is the mitochondrion membrane. It catalyses the reaction a ubiquinone + NADH + 5 H(+)(in) = a ubiquinol + NAD(+) + 4 H(+)(out). Core subunit of the mitochondrial membrane respiratory chain NADH dehydrogenase (Complex I) that is believed to belong to the minimal assembly required for catalysis. Complex I functions in the transfer of electrons from NADH to the respiratory chain. The immediate electron acceptor for the enzyme is believed to be ubiquinone. The sequence is that of NADH-ubiquinone oxidoreductase chain 3 (nad3) from Dictyostelium citrinum (Slime mold).